A 498-amino-acid polypeptide reads, in one-letter code: Histidine--tRNA ligase (498 aa).

Belongs to the class-II aminoacyl-tRNA synthetase family. As to quaternary structure, homodimer.

The protein localises to the cytoplasm. The enzyme catalyses tRNA(His) + L-histidine + ATP = L-histidyl-tRNA(His) + AMP + diphosphate + H(+). This Mycoplasmopsis synoviae (strain 53) (Mycoplasma synoviae) protein is Histidine--tRNA ligase.